The chain runs to 532 residues: Putative cysteine desulfurase PbSufS (532 aa).

An N-terminal signal peptide occupies residues 1 to 18 (MNNESICILLLLFVKITS). The residue at position 286 (Lys-286) is an N6-(pyridoxal phosphate)lysine. Cys-480 (cysteine persulfide intermediate) is an active-site residue.

Belongs to the class-V pyridoxal-phosphate-dependent aminotransferase family. Csd subfamily. As to quaternary structure, monomer. Interacts with SufE; interaction enhances cysteine desulfurase activity of SufS. Pyridoxal 5'-phosphate serves as cofactor.

It localises to the plastid. The protein localises to the apicoplast. The catalysed reaction is (sulfur carrier)-H + L-cysteine = (sulfur carrier)-SH + L-alanine. Its pathway is cofactor biosynthesis; iron-sulfur cluster biosynthesis. Catalyzes sulfur activation and mobilization in sulfur mobilization (SUF) pathway for iron-sulfur (Fe-S) cluster biogenesis. Active when in complex with a partner protein SufE. Required for apicoplast maintenance. Plays a role in the development of sporozoites in oocysts in mosquitoes. The chain is Putative cysteine desulfurase PbSufS from Plasmodium berghei (strain Anka).